The chain runs to 218 residues: Very-long-chain (3R)-3-hydroxyacyl-CoA dehydratase hpo-8 (218 aa).

A run of 5 helical transmembrane segments spans residues 15–35 (ILGW…GLTW), 44–64 (FELK…IVGL), 86–106 (ILHL…LVAW), 137–157 (LFYV…FASL), and 176–196 (MGIS…PGFP). Catalysis depends on residues Y142 and E149.

Belongs to the very long-chain fatty acids dehydratase HACD family.

It is found in the membrane. The enzyme catalyses a very-long-chain (3R)-3-hydroxyacyl-CoA = a very-long-chain (2E)-enoyl-CoA + H2O. It functions in the pathway lipid metabolism; fatty acid biosynthesis. Its function is as follows. Catalyzes the third of the four reactions of the long-chain fatty acids elongation cycle. This endoplasmic reticulum-bound enzymatic process, allows the addition of two carbons to the chain of long- and very long-chain fatty acids/VLCFAs per cycle. This enzyme catalyzes the dehydration of the 3-hydroxyacyl-CoA intermediate into trans-2,3-enoyl-CoA, within each cycle of fatty acid elongation. Thereby, it participates in the production of VLCFAs of different chain lengths that are involved in multiple biological processes as precursors of membrane lipids and lipid mediators. In Caenorhabditis elegans, this protein is Very-long-chain (3R)-3-hydroxyacyl-CoA dehydratase hpo-8 (hpo-8).